Here is a 561-residue protein sequence, read N- to C-terminus: V-type proton ATPase catalytic subunit A (561 aa).

ATP is bound at residue 190-197 (GAFGCGKT).

The protein belongs to the ATPase alpha/beta chains family. In terms of assembly, V-ATPase is a heteromultimeric enzyme composed of a peripheral catalytic V1 complex (main components: subunits A, B, C, D, E, and F) attached to an integral membrane V0 proton pore complex (main component: the proteolipid protein). As to expression, high expression in the mesocotyl tip of etiolated seedlings compared to the base.

It carries out the reaction ATP + H2O + 4 H(+)(in) = ADP + phosphate + 5 H(+)(out). Catalytic subunit of the peripheral V1 complex of vacuolar ATPase. V-ATPase vacuolar ATPase is responsible for acidifying a variety of intracellular compartments in eukaryotic cells. This chain is V-type proton ATPase catalytic subunit A, found in Zea mays (Maize).